The chain runs to 191 residues: Adenylate kinase (191 aa).

11 to 16 contributes to the ATP binding site; sequence GAGKGT. The tract at residues 31-60 is NMP; it reads STGDILRSNVAERSPLGIKAKDYMDKGDLV. AMP is bound by residues Thr-32, Arg-37, 58–60, 86–89, and Gln-93; these read DLV and GFPR. The LID stretch occupies residues 132–138; that stretch reads SRKREDD. Residue Arg-133 participates in ATP binding. Positions 135 and 146 each coordinate AMP. ATP is bound at residue Asn-174.

This sequence belongs to the adenylate kinase family. Monomer.

It localises to the cytoplasm. It catalyses the reaction AMP + ATP = 2 ADP. Its pathway is purine metabolism; AMP biosynthesis via salvage pathway; AMP from ADP: step 1/1. Catalyzes the reversible transfer of the terminal phosphate group between ATP and AMP. Plays an important role in cellular energy homeostasis and in adenine nucleotide metabolism. This Trichodesmium erythraeum (strain IMS101) protein is Adenylate kinase.